The following is a 644-amino-acid chain: Acetolactate synthase 1, chloroplastic (644 aa).

The N-terminal 43 residues, 1 to 43 (MATTAAAAAAALSAAATAKTGRKNHQRHHVLPARGRVGAAAVR), are a transit peptide targeting the chloroplast. The disordered stretch occupies residues 47–67 (VSPVTPPSPAPPATPLRPWGP). The span at 50-61 (VTPPSPAPPATP) shows a compositional bias: pro residues. Glu118 is a binding site for thiamine diphosphate. Residues Cys138 and Cys284 are joined by a disulfide bond. FAD-binding positions include Arg220, 326 to 347 (HGTV…FGVR), and 369 to 388 (DIDP…ICAD). The thiamine pyrophosphate binding stretch occupies residues 461-541 (QHQMWAAQYY…VKVMVLNNQH (81 aa)). Mg(2+) contacts are provided by Asp512 and Asn539.

Belongs to the TPP enzyme family. It depends on Mg(2+) as a cofactor. Thiamine diphosphate is required as a cofactor.

It is found in the plastid. The protein localises to the chloroplast. The catalysed reaction is 2 pyruvate + H(+) = (2S)-2-acetolactate + CO2. It participates in amino-acid biosynthesis; L-isoleucine biosynthesis; L-isoleucine from 2-oxobutanoate: step 1/4. Its pathway is amino-acid biosynthesis; L-valine biosynthesis; L-valine from pyruvate: step 1/4. This Oryza sativa subsp. japonica (Rice) protein is Acetolactate synthase 1, chloroplastic (ALS1).